The sequence spans 567 residues: DNA ligase (567 aa).

Glu-260 contributes to the ATP binding site. Lys-262 serves as the catalytic N6-AMP-lysine intermediate. Residues Arg-267, Arg-282, Glu-312, Phe-352, Arg-427, and Lys-433 each coordinate ATP.

This sequence belongs to the ATP-dependent DNA ligase family. Mg(2+) is required as a cofactor.

It carries out the reaction ATP + (deoxyribonucleotide)n-3'-hydroxyl + 5'-phospho-(deoxyribonucleotide)m = (deoxyribonucleotide)n+m + AMP + diphosphate.. Its function is as follows. DNA ligase that seals nicks in double-stranded DNA during DNA replication, DNA recombination and DNA repair. This is DNA ligase from Methanococcoides burtonii (strain DSM 6242 / NBRC 107633 / OCM 468 / ACE-M).